The following is a 449-amino-acid chain: Neuraminidase (449 aa).

Residues 1 to 6 lie on the Intravirion side of the membrane; sequence MNPNQK. The helical transmembrane segment at 7 to 29 threads the bilayer; that stretch reads IITIGSVSLTIATVCFLMQIAIL. An involved in apical transport and lipid raft association region spans residues 11-33; sequence GSVSLTIATVCFLMQIAILATNV. Topologically, residues 30–449 are virion surface; it reads ATNVTLHFRQ…DGANINFMPL (420 aa). Asn32, Asn48, and Asn66 each carry an N-linked (GlcNAc...) asparagine; by host glycan. The segment at 36–68 is hypervariable stalk region; the sequence is HFRQNERSIPAYNQTTPCKPIIIERNIKYRNWS. The segment at 71–449 is head of neuraminidase; that stretch reads QCQITGFAPF…DGANINFMPL (379 aa). Disulfide bonds link Cys72–Cys397, Cys104–Cys109, Cys163–Cys210, Cys212–Cys217, Cys258–Cys271, Cys260–Cys269, Cys298–Cys317, and Cys401–Cys427. Arg98 contributes to the substrate binding site. Residues Asn123 and Asn126 are each glycosylated (N-linked (GlcNAc...) asparagine; by host). Residue Asp131 is the Proton donor/acceptor of the active site. Arg132 lines the substrate pocket. 2 N-linked (GlcNAc...) asparagine; by host glycosylation sites follow: Asn180 and Asn214. 256–257 provides a ligand contact to substrate; that stretch reads EE. Arg272 contributes to the substrate binding site. The Ca(2+) site is built by Asp273, Gly277, and Asp304. The segment at 305-330 is disordered; sequence TPRNDDSSSSSNCRDPNNERGNPGVK. Arg351 is a binding site for substrate. N-linked (GlcNAc...) asparagine; by host glycosylation is present at Asn382. Residue Tyr386 is the Nucleophile of the active site.

It belongs to the glycosyl hydrolase 34 family. Homotetramer. It depends on Ca(2+) as a cofactor. N-glycosylated.

It localises to the virion membrane. The protein resides in the host apical cell membrane. It carries out the reaction Hydrolysis of alpha-(2-&gt;3)-, alpha-(2-&gt;6)-, alpha-(2-&gt;8)- glycosidic linkages of terminal sialic acid residues in oligosaccharides, glycoproteins, glycolipids, colominic acid and synthetic substrates.. With respect to regulation, inhibited by the neuraminidase inhibitors zanamivir (Relenza) and oseltamivir (Tamiflu). These drugs interfere with the release of progeny virus from infected cells and are effective against all influenza strains. Resistance to neuraminidase inhibitors is quite rare. Catalyzes the removal of terminal sialic acid residues from viral and cellular glycoconjugates. Cleaves off the terminal sialic acids on the glycosylated HA during virus budding to facilitate virus release. Additionally helps virus spread through the circulation by further removing sialic acids from the cell surface. These cleavages prevent self-aggregation and ensure the efficient spread of the progeny virus from cell to cell. Otherwise, infection would be limited to one round of replication. Described as a receptor-destroying enzyme because it cleaves a terminal sialic acid from the cellular receptors. May facilitate viral invasion of the upper airways by cleaving the sialic acid moieties on the mucin of the airway epithelial cells. Likely to plays a role in the budding process through its association with lipid rafts during intracellular transport. May additionally display a raft-association independent effect on budding. Plays a role in the determination of host range restriction on replication and virulence. Sialidase activity in late endosome/lysosome traffic seems to enhance virus replication. The sequence is that of Neuraminidase from Aves.